A 165-amino-acid polypeptide reads, in one-letter code: uncharacterized protein (165 aa).

Residues 28-139 (QNALKDTGLA…KPNEREEAVK (112 aa)) form the Cupin type-1 domain.

This is an uncharacterized protein from Bacillus subtilis (strain 168).